We begin with the raw amino-acid sequence, 352 residues long: Rhodopsin, deep-sea form (352 aa).

The Extracellular segment spans residues 1–36 (MNGTEGPNFYIPMSNITGVVRSPFEYPQYYLAEPWA). Residues Asn2 and Asn15 are each glycosylated (N-linked (GlcNAc...) asparagine). Residues 37-61 (YTILAAYMFTLILLGFPVNFLTLYV) form a helical membrane-spanning segment. The Cytoplasmic portion of the chain corresponds to 62–73 (TIEHKKLRTPLN). A helical membrane pass occupies residues 74–98 (YILLNLAVANLFMVFGGFTTTVYTS). Over 99 to 113 (MHGYFVFGETGCNLE) the chain is Extracellular. Cys110 and Cys187 are disulfide-bonded. A helical membrane pass occupies residues 114-133 (GYFATLGGEISLWSLVVLAI). Residues 134–152 (ERWVVVCKPMSNFRFGENH) are Cytoplasmic-facing. A helical membrane pass occupies residues 153-176 (AIMGLAFTWIMANSCAMPPLFGWS). Topologically, residues 177–202 (RYIPEGMQCSCGVDYYTLKPEVNNES) are extracellular. N-linked (GlcNAc...) asparagine glycosylation is present at Asn200. A helical transmembrane segment spans residues 203–230 (FVIYMFIVHFSVPLTIISFCYGRLVCTV). Residues 231-252 (KEAAAQQQESETTQRAEREVTR) are Cytoplasmic-facing. Residues 253–276 (MVVIMVIAFLVCWVPYASVAWYIF) form a helical membrane-spanning segment. At 277 to 284 (THQGSTFG) the chain is on the extracellular side. A helical membrane pass occupies residues 285 to 309 (PVFMTVPSFFAKSSAIYNPLIYICL). Position 296 is an N6-(retinylidene)lysine (Lys296). Residues 310 to 352 (NSQFRNCMITTLFCGKNPFQEEEGASTTASKTEASSVSSVSPA) are Cytoplasmic-facing. Cys323 carries the S-palmitoyl cysteine lipid modification. A disordered region spans residues 333-352 (GASTTASKTEASSVSSVSPA). Residues 334–352 (ASTTASKTEASSVSSVSPA) show a composition bias toward low complexity.

Belongs to the G-protein coupled receptor 1 family. Opsin subfamily. In terms of processing, phosphorylated on some or all of the serine and threonine residues present in the C-terminal region. As to expression, rod shaped photoreceptor cells which mediates vision in dim light.

Its subcellular location is the membrane. Functionally, visual pigments such as rhodopsin and porphyropsin are light-absorbing molecules that mediate vision. Rhodopsin consists of an apoprotein, opsin, covalently linked to 11-cis-retinal. This receptor is coupled to the activation of phospholipase C. Porphyropsin consists of opsin covalently linked to 11-cis 3,4-didehydroretinal. This chain is Rhodopsin, deep-sea form, found in Anguilla anguilla (European freshwater eel).